We begin with the raw amino-acid sequence, 261 residues long: Triosephosphate isomerase (261 aa).

10 to 12 provides a ligand contact to substrate; the sequence is NWK. His100 acts as the Electrophile in catalysis. The active-site Proton acceptor is Glu172. Residues Gly178, Ser218, and 239 to 240 each bind substrate; that span reads GG.

The protein belongs to the triosephosphate isomerase family. Homodimer.

It is found in the cytoplasm. The enzyme catalyses D-glyceraldehyde 3-phosphate = dihydroxyacetone phosphate. It participates in carbohydrate biosynthesis; gluconeogenesis. It functions in the pathway carbohydrate degradation; glycolysis; D-glyceraldehyde 3-phosphate from glycerone phosphate: step 1/1. In terms of biological role, involved in the gluconeogenesis. Catalyzes stereospecifically the conversion of dihydroxyacetone phosphate (DHAP) to D-glyceraldehyde-3-phosphate (G3P). The sequence is that of Triosephosphate isomerase from Rhodococcus jostii (strain RHA1).